A 516-amino-acid chain; its full sequence is Protein BTN1 (516 aa).

The next 8 membrane-spanning stretches (helical) occupy residues 24–44 (LFAAFMIFGLLNNVLYVIILS), 57–77 (GVVALFNIFPALITKVVWPLL), 88–108 (VGFCTICSWFGIITIALSSSL), 112–132 (LLGISLASLSSGMGELTFLQL), 146–166 (LGAWSSGTGFAGVAGAGIWWL), 169–189 (GLGVKGGLGLSSFLPLFFPIT), 371–391 (PAIIQFLVLSLLFLQAKTFFF), and 409–429 (SITIVFLLICLEGLCGGSGYV).

It belongs to the battenin family.

Its subcellular location is the vacuole membrane. Functionally, involved in vacuolar transport and vacuole pH homeostasis. Also required for cytokinesis. This is Protein BTN1 (BTN1) from Cryptococcus neoformans var. neoformans serotype D (strain JEC21 / ATCC MYA-565) (Filobasidiella neoformans).